The following is a 213-amino-acid chain: Thymidine kinase (213 aa).

ATP contacts are provided by residues 20–27 (GPMFSGKT) and 93–96 (DEAQ). The active-site Proton acceptor is E94. C150, C153, C185, and H188 together coordinate Zn(2+).

It belongs to the thymidine kinase family. In terms of assembly, homotetramer.

Its subcellular location is the cytoplasm. It catalyses the reaction thymidine + ATP = dTMP + ADP + H(+). This Mycoplasma genitalium (strain ATCC 33530 / DSM 19775 / NCTC 10195 / G37) (Mycoplasmoides genitalium) protein is Thymidine kinase.